Consider the following 602-residue polypeptide: Elongation factor 4 (602 aa).

The tr-type G domain maps to 6-188; it reads DRIRNFCIIA…RIVRDVPPPG (183 aa). Residues 18–23 and 135–138 each bind GTP; these read DHGKST and NKID.

This sequence belongs to the TRAFAC class translation factor GTPase superfamily. Classic translation factor GTPase family. LepA subfamily.

It is found in the cell membrane. It carries out the reaction GTP + H2O = GDP + phosphate + H(+). Functionally, required for accurate and efficient protein synthesis under certain stress conditions. May act as a fidelity factor of the translation reaction, by catalyzing a one-codon backward translocation of tRNAs on improperly translocated ribosomes. Back-translocation proceeds from a post-translocation (POST) complex to a pre-translocation (PRE) complex, thus giving elongation factor G a second chance to translocate the tRNAs correctly. Binds to ribosomes in a GTP-dependent manner. The protein is Elongation factor 4 of Desulforudis audaxviator (strain MP104C).